A 290-amino-acid chain; its full sequence is Inorganic pyrophosphatase (290 aa).

R81 contributes to the diphosphate binding site. Residues D118, D123, and D155 each coordinate Mg(2+).

It belongs to the PPase family. Mg(2+) serves as cofactor.

The protein localises to the cytoplasm. The enzyme catalyses diphosphate + H2O = 2 phosphate + H(+). This Neurospora crassa (strain ATCC 24698 / 74-OR23-1A / CBS 708.71 / DSM 1257 / FGSC 987) protein is Inorganic pyrophosphatase (ipp-1).